Consider the following 285-residue polypeptide: Cytochrome P450 monooxygenase eupD (285 aa).

The N-terminal stretch at 1 to 19 (MSIAGLVTTLPWLMNMLRA) is a signal peptide. C229 contacts heme.

The protein belongs to the cytochrome P450 family. Heme serves as cofactor.

The protein operates within secondary metabolite biosynthesis; terpenoid biosynthesis. Functionally, cytochrome P450 monooxygenase; part of the gene cluster that mediates the biosynthesis of eupenifeldin, a bistropolone meroterpenoid that acts as an antitumor agent. The first step of eupenifeldin biosynthesis is the biosynthesis of 3-methylorcinaldehyde performed by the non-reducing polyketide synthase eupA. Oxidative dearomatization of 3-methylorcinaldehyde likely catalyzed by the FAD-dependent monooxygenase eupB is followed by oxidative ring expansion by the 2-oxoglutarate-dependent dioxygenase eupC to provide the first tropolone metabolite, tropolone stipitaldehyde. In parallel, generation of sesquiterpene alpha-humulene from farnesylpyrophosphate (FPP) is catalyzed by the terpene cyclase eupE. The cytochrome P450 monooxygenase eupD then hydroxylates humulene to humulenol. The putative Diels-Alderase eupF probably catalyzes the formation of the tropolone-humulene skeleton by linking humulenol and the polyketide moiety. The short-chain dehydrogenase/reductase eupG and the flavin-dependent monooxygenase eupH are also essential for eupenifeldin biosynthesis and are likely the additional decorating enzymes of the tropolone-humulene skeleton to produce final eupenifeldin or derivatives. The polypeptide is Cytochrome P450 monooxygenase eupD (Phoma sp).